The primary structure comprises 298 residues: Mitochondrial substrate carrier family protein N (298 aa).

At 1–13 (MAGDLTPSLFLKY) the chain is on the mitochondrial intermembrane side. Solcar repeat units follow at residues 8-92 (SLFL…FKKT), 104-188 (FRIP…TAEN), and 207-290 (QKLS…IKQM). A helical membrane pass occupies residues 14–34 (GFGGALSCSITHSLVVPLDVV). The Mitochondrial matrix portion of the chain corresponds to 35–60 (KTLLQTNPGKYTGMMNGFSTVIKEQG). Residues 61 to 81 (PSGLLQGLGPTAVGYALQGFL) form a helical membrane-spanning segment. Topologically, residues 82–105 (KFGFYEVFKKTYADAVGEKADQFR) are mitochondrial intermembrane. A helical membrane pass occupies residues 106–126 (IPIWLAASATAEVIADIALCP). Residues 127–162 (NEAVRIRLVAEPTFAKSPVEAFGKIFKQEGVLGFYK) lie on the Mitochondrial matrix side of the membrane. A helical membrane pass occupies residues 163-179 (GLPPILLKQVPYTMAKF). The Mitochondrial intermembrane segment spans residues 180–208 (AVFEFTAENVYKGLAASGKPKESLTDGQK). A helical transmembrane segment spans residues 209-229 (LSVSLGSGIVAGIVAAIVSQP). Over 230–262 (ADTILSKINQEKTDGGVVKAIGNIMRRLGVRGL) the chain is Mitochondrial matrix. The helical transmembrane segment at 263–283 (FLGLPTRCFMVGTLTAGQFFI) threads the bilayer. Residues 284–298 (YDGIKQMLGLTPAKK) are Mitochondrial intermembrane-facing.

The protein belongs to the mitochondrial carrier (TC 2.A.29) family.

It localises to the mitochondrion inner membrane. Its function is as follows. Mitochondrial solute carriers shuttle metabolites, nucleotides, and cofactors through the mitochondrial inner membrane. Transports phosphate groups from the cytosol to the mitochondrial matrix. Phosphate is cotransported with H(+). The chain is Mitochondrial substrate carrier family protein N (mcfN) from Dictyostelium discoideum (Social amoeba).